Here is a 299-residue protein sequence, read N- to C-terminus: MAAAEGGCGAGVEADRELEELLESALDDFDKAKPSPAPSPTISAPDASGPQKRSPGDTAKDALFASQEKFFQELFDSELASQATAEFEKAMKELAEEEPHLVEQFQKLSEAAGRVGSDASSQQEFTSCLKETLSGLAKNATDLQNSGMSEEELTKAMEGLGMDEGDGEGNILPIMQSLMQNLLSKDVLYPSLKEITEKYPEWLQSHQESIPPEQFEKYQQQHSVMGKICEQFEAETPTDSEATHRARFEAVLDLMQQLQDLGHPPKELAGEMPPGLNFDLDALNLSGPPGANGEQCLIM.

At Ala-2 the chain carries N-acetylalanine. The tract at residues 2–56 (AAAEGGCGAGVEADRELEELLESALDDFDKAKPSPAPSPTISAPDASGPQKRSPG) is docking to the peroxisome membrane and binding to PEX3. The interval 2 to 91 (AAAEGGCGAG…QATAEFEKAM (90 aa)) is necessary for PEX19 function on peroxisome biogenesis. The segment at 25–63 (ALDDFDKAKPSPAPSPTISAPDASGPQKRSPGDTAKDAL) is disordered. Ser-35, Ser-39, Ser-54, and Ser-66 each carry phosphoserine. Position 236 is a phosphothreonine (Thr-236). A Cysteine methyl ester modification is found at Cys-296. Cys-296 carries the S-farnesyl cysteine lipid modification. Positions 297–299 (LIM) are cleaved as a propeptide — removed in mature form.

Belongs to the peroxin-19 family. As to quaternary structure, interacts with a broad range of peroxisomal membrane proteins, including PEX3, PEX10, PEX11A, PEX11B, PEX12, PEX13, PEX14 and PEX16, PXMP2/PMP22, PXMP4/PMP24, SLC25A17/PMP34, ABCD1/ALDP, ABCD2/ALDRP, and ABCD3/PMP70. Also interacts with the tumor suppressor CDKN2A/p19ARF.

It is found in the cytoplasm. The protein resides in the peroxisome membrane. Its function is as follows. Necessary for early peroxisomal biogenesis. Acts both as a cytosolic chaperone and as an import receptor for peroxisomal membrane proteins (PMPs). Binds and stabilizes newly synthesized PMPs in the cytoplasm by interacting with their hydrophobic membrane-spanning domains, and targets them to the peroxisome membrane by binding to the integral membrane protein PEX3. Excludes CDKN2A from the nucleus and prevents its interaction with MDM2, which results in active degradation of TP53. The sequence is that of Peroxisomal biogenesis factor 19 (Pex19) from Rattus norvegicus (Rat).